The following is a 182-amino-acid chain: Peptidyl-tRNA hydrolase (182 aa).

Tyrosine 14 lines the tRNA pocket. The active-site Proton acceptor is histidine 19. Phenylalanine 60, asparagine 62, and asparagine 106 together coordinate tRNA.

It belongs to the PTH family. Monomer.

It localises to the cytoplasm. The catalysed reaction is an N-acyl-L-alpha-aminoacyl-tRNA + H2O = an N-acyl-L-amino acid + a tRNA + H(+). Its function is as follows. Hydrolyzes ribosome-free peptidyl-tRNAs (with 1 or more amino acids incorporated), which drop off the ribosome during protein synthesis, or as a result of ribosome stalling. Catalyzes the release of premature peptidyl moieties from peptidyl-tRNA molecules trapped in stalled 50S ribosomal subunits, and thus maintains levels of free tRNAs and 50S ribosomes. This chain is Peptidyl-tRNA hydrolase, found in Campylobacter concisus (strain 13826).